A 191-amino-acid chain; its full sequence is MEVPSEIIQKLDILQNLIKKWNKSINLISDNTIPNFWQRHILDSLQLMQYISNKEIHLVDIGSGAGFPGIVLSIAGVAKVSLIEADLRKCIFLEKASKISNNSIQIINQRIEKIEIDCNILTCRAFSNLNTIFNCTQNISVREKFLLLKGKNYLTEIVKAKEKWLFDYLIHQSITCRSGKILEVNNLTKII.

S-adenosyl-L-methionine-binding positions include Gly-62, Phe-67, 111 to 112 (IE), and Arg-124.

It belongs to the methyltransferase superfamily. RNA methyltransferase RsmG family.

The protein resides in the cytoplasm. It carries out the reaction guanosine(527) in 16S rRNA + S-adenosyl-L-methionine = N(7)-methylguanosine(527) in 16S rRNA + S-adenosyl-L-homocysteine. Specifically methylates the N7 position of guanine in position 527 of 16S rRNA. The sequence is that of Ribosomal RNA small subunit methyltransferase G from Rickettsia typhi (strain ATCC VR-144 / Wilmington).